The primary structure comprises 220 residues: Deoxyribose-phosphate aldolase (220 aa).

Catalysis depends on Asp-89, which acts as the Proton donor/acceptor. Lys-151 functions as the Schiff-base intermediate with acetaldehyde in the catalytic mechanism. The active-site Proton donor/acceptor is Lys-180.

The protein belongs to the DeoC/FbaB aldolase family. DeoC type 1 subfamily.

The protein localises to the cytoplasm. The enzyme catalyses 2-deoxy-D-ribose 5-phosphate = D-glyceraldehyde 3-phosphate + acetaldehyde. Its pathway is carbohydrate degradation; 2-deoxy-D-ribose 1-phosphate degradation; D-glyceraldehyde 3-phosphate and acetaldehyde from 2-deoxy-alpha-D-ribose 1-phosphate: step 2/2. Functionally, catalyzes a reversible aldol reaction between acetaldehyde and D-glyceraldehyde 3-phosphate to generate 2-deoxy-D-ribose 5-phosphate. The sequence is that of Deoxyribose-phosphate aldolase from Bdellovibrio bacteriovorus (strain ATCC 15356 / DSM 50701 / NCIMB 9529 / HD100).